The chain runs to 382 residues: Mannitol-1-phosphate 5-dehydrogenase (382 aa).

4–15 (AVHFGAGNIGRG) is a binding site for NAD(+).

Belongs to the mannitol dehydrogenase family.

It catalyses the reaction D-mannitol 1-phosphate + NAD(+) = beta-D-fructose 6-phosphate + NADH + H(+). This chain is Mannitol-1-phosphate 5-dehydrogenase, found in Vibrio parahaemolyticus serotype O3:K6 (strain RIMD 2210633).